The sequence spans 827 residues: SID1 transmembrane family member 1 (827 aa).

Positions 1–19 (MRGCLRLALLCALPWLLLA) are cleaved as a signal peptide. Residues 20–309 (ASPGHPAKSP…SIKESVYVKS (290 aa)) are Extracellular-facing. N-linked (GlcNAc...) asparagine glycosylation is found at asparagine 57, asparagine 67, asparagine 83, asparagine 136, and asparagine 282. The helical transmembrane segment at 310–330 (SLFSVFIFLSFYLGCLLVGFV) threads the bilayer. Residues 331–442 (HYLRFQRKSI…DRRIVSKKYK (112 aa)) are Cytoplasmic-facing. The interval 355 to 408 (ASHPIAASTPEGSNYGTIDESSSSPGRQMSSSDGGPPGQSDTDSSVEESDFDTM) is disordered. Residues 364-374 (PEGSNYGTIDE) are compositionally biased toward polar residues. Positions 375-397 (SSSSPGRQMSSSDGGPPGQSDTD) are enriched in low complexity. The span at 398–408 (SSVEESDFDTM) shows a compositional bias: acidic residues. The helical transmembrane segment at 443 to 463 (IYFWNIITIAVFYALPVIQLV) threads the bilayer. Residues 464–494 (ITYQTVVNVTGNQDICYYNFLCAHPLGVLSA) lie on the Extracellular side of the membrane. N-linked (GlcNAc...) asparagine glycosylation is present at asparagine 471. The helical transmembrane segment at 495 to 515 (FNNILSNLGHVLLGFLFLLIV) threads the bilayer. Residues 516–541 (LRRDILHRRALEAKDIFAVEYGIPKH) lie on the Cytoplasmic side of the membrane. A helical transmembrane segment spans residues 542 to 562 (FGLFYAMGIALMMEGVLSACY). Topologically, residues 563–572 (HVCPNYSNFQ) are extracellular. N-linked (GlcNAc...) asparagine glycosylation occurs at asparagine 567. Residues 573-590 (FDTSFMYMIAGLCMLKLY) form a helical membrane-spanning segment. The Cytoplasmic portion of the chain corresponds to 591–600 (QTRHPDINAS). The helical transmembrane segment at 601 to 621 (AYSAYASFAVVIMVTVLGVVF) threads the bilayer. The Extracellular portion of the chain corresponds to 622–626 (GKNDV). The chain crosses the membrane as a helical span at residues 627–647 (WFWVIFSAIHVLASLALSTQI). Topologically, residues 648–683 (YYMGRFKIDLGIFRRAAMVFYTDCIQQCSRPLYMDR) are cytoplasmic. A helical membrane pass occupies residues 684–704 (MVLLVVGNLVNWSFALFGLIY). Residues 705–710 (RPRDFA) are Extracellular-facing. The chain crosses the membrane as a helical span at residues 711 to 731 (SYMLGIFICNLLLYLAFYIIM). At 732–741 (KLRSSEKVLP) the chain is on the cytoplasmic side. Residues 742 to 762 (VPLFCIVATAVMWAAALYFFF) form a helical membrane-spanning segment. The Extracellular portion of the chain corresponds to 763–791 (QNLSSWEGTPAESREKNRECILLDFFDDH). The N-linked (GlcNAc...) asparagine glycan is linked to asparagine 764. A helical membrane pass occupies residues 792-812 (DIWHFLSATALFFSFLVLLTL). Topologically, residues 813 to 827 (DDDLDVVRRDQIPVF) are cytoplasmic.

The protein belongs to the SID1 family.

Its subcellular location is the membrane. In vitro binds long double-stranded RNA (dsRNA) (500 and 700 base pairs), but not dsRNA shorter than 300 bp. Not involved in RNA autophagy, a process in which RNA is directly imported into lysosomes in an ATP-dependent manner, and degraded. The protein is SID1 transmembrane family member 1 (SIDT1) of Homo sapiens (Human).